The chain runs to 220 residues: Protein CREG1 (220 aa).

A signal peptide spans 1-31 (MAARAPELARSLLAALLAPALVALLVSPASG). The interval 30-53 (SGRGGRDHGDWDVDRRLPPLPPRE) is disordered. The span at 33 to 53 (GGRDHGDWDVDRRLPPLPPRE) shows a compositional bias: basic and acidic residues. Asparagine 160 and asparagine 216 each carry an N-linked (GlcNAc...) asparagine glycan.

Belongs to the CREG family. Homodimer. Interacts with IGF2R; the interaction is dependent on glycosylation. In terms of processing, N-glycosylated. Widely expressed.

The protein resides in the secreted. Functionally, may contribute to the transcriptional control of cell growth and differentiation. Antagonizes transcriptional activation and cellular transformation by the adenovirus E1A protein. The transcriptional control activity of cell growth requires interaction with IGF2R. The protein is Protein CREG1 (Creg1) of Mus musculus (Mouse).